Consider the following 336-residue polypeptide: Type II methyltransferase M.PvuII (336 aa).

2 tandem repeats follow at residues 11–113 and 181–293. The tract at residues 196–215 is disordered; that stretch reads TPKTRPSGHDIGKSFSKDNG. Residues 202–211 are compositionally biased toward basic and acidic residues; the sequence is SGHDIGKSFS.

It belongs to the N(4)/N(6)-methyltransferase family. N(4) subfamily. Monomer.

It carries out the reaction a 2'-deoxycytidine in DNA + S-adenosyl-L-methionine = an N(4)-methyl-2'-deoxycytidine in DNA + S-adenosyl-L-homocysteine + H(+). Its function is as follows. A beta subtype methylase, recognizes the double-stranded sequence 5'-CAGCTG-3', methylates C-4 on both strands, and protects the DNA from cleavage by the PvuII endonuclease. This chain is Type II methyltransferase M.PvuII, found in Proteus hauseri.